The primary structure comprises 1197 residues: MAGHLVNYGKHRTRRSYARIKEVLELPNLIEIQSNSYQWFLDEGLREMFDDIMPIDDFAGNLSLEFVDYQLLEPKYTVEEARQHDANYSAPLHVTLKLTNHETGEIKSQDVFFGDFPLMTDQGTFIINGAERVIVSQLVRSPGVYFNSAIDKNSRTTYGTTVIPNRGAWLEFETDAKDIAYVRIDRTRKIPMSVLVRALGYGSDQEIIDILGDNDSLMLTLEKDIHKNTDDSRTEEALKDVYERLRPGEPKTADSSRSLLFARFFDAKRYDLASVGRYKINKKLSLKTRLLGQTLAETLADPDTGEVIAAKDTVVDRQVMDALAPYLDCEDFKAVTYQPSDEGVLPEPMTLQVIKVYSQKTPDKEINLIGNGHIDAKVKHVIPADIIASMNYFFNLQEGLGSTDDIDHLGNRRIRSVGELLQNQFRIGLSRMERVVRERMSIQDTSTVTPQQLINIRPVVASIKEFFGSSQLSQFMDQTNPLGELTHKRRLSALGPGGLTRDRAGYEVRDVHYTHYGRMCPIETPEGPNIGLINSLASYAVVNRYGFIETPYRRVSWDTHDVTDKIDYLTADEEDNYVIAQANSPLNDDGSFVDNTVLARYKDDNIETSIDKLDYMDVSPKQVVAVATACIPFLENDDSNRALMGANMQRQAVPLVNPHAPLVGTGMEYKAAHDSGIALLAQHAGTVEYVDAKVIRVRREDSSLDTYELMKFRRSNAGKNYNQRPIVAKGDHVDVDEIIADGPAMEKGELALGQNPLIAFMTWNMYNYEDAIVLSERLVKEDLYTSIHIEEYESEARDTKLGPEEITREIPNVGEDSLKDLDEFGIVRVGAEVKDGDILVGKVTPKGVTELSAEERLLHAIFGEKAREVRDTSLKVPHGGGGIIQDVKIFTREAGDELSPGVNMMVRVYITQKRKIQVGDKMAGRHGNKGTVSIVVPEEDMPYTPDGTPVDILLSPMGVPSRMNIGQVLELHLGMAARNLGIHVATPVFDGAQDKDLWDAVREANMPSDGKSILYDGRTGEPFDTRVSVGVMYYMKLAHMVDDKLHARSIGPYSLVTQQPLGGKAQFGGQRFGEMEVWALEAYGAAYTLQEILTYKSDDVVGRVKTYEAIVKGEPIPKPGVPESFRVLVKELQSLGLDMKVLDIDNQEIELRDMDDDDDDVVNVDALSKYAKEQEEKKAQQEAEKAQAASAEDPSAE.

Positions 1172 to 1185 (KEQEEKKAQQEAEK) are enriched in basic and acidic residues. The segment at 1172 to 1197 (KEQEEKKAQQEAEKAQAASAEDPSAE) is disordered. Residues 1186–1197 (AQAASAEDPSAE) show a composition bias toward low complexity.

Belongs to the RNA polymerase beta chain family. As to quaternary structure, the RNAP catalytic core consists of 2 alpha, 1 beta, 1 beta' and 1 omega subunit. When a sigma factor is associated with the core the holoenzyme is formed, which can initiate transcription.

The enzyme catalyses RNA(n) + a ribonucleoside 5'-triphosphate = RNA(n+1) + diphosphate. Functionally, DNA-dependent RNA polymerase catalyzes the transcription of DNA into RNA using the four ribonucleoside triphosphates as substrates. The protein is DNA-directed RNA polymerase subunit beta of Latilactobacillus sakei subsp. sakei (strain 23K) (Lactobacillus sakei subsp. sakei).